Reading from the N-terminus, the 311-residue chain is Methionyl-tRNA formyltransferase (311 aa).

112–115 contributes to the (6S)-5,6,7,8-tetrahydrofolate binding site; sequence SLLP.

Belongs to the Fmt family.

The catalysed reaction is L-methionyl-tRNA(fMet) + (6R)-10-formyltetrahydrofolate = N-formyl-L-methionyl-tRNA(fMet) + (6S)-5,6,7,8-tetrahydrofolate + H(+). In terms of biological role, attaches a formyl group to the free amino group of methionyl-tRNA(fMet). The formyl group appears to play a dual role in the initiator identity of N-formylmethionyl-tRNA by promoting its recognition by IF2 and preventing the misappropriation of this tRNA by the elongation apparatus. In Geobacter metallireducens (strain ATCC 53774 / DSM 7210 / GS-15), this protein is Methionyl-tRNA formyltransferase.